The primary structure comprises 310 residues: Haloalkane dehalogenase (310 aa).

One can recognise an AB hydrolase-1 domain in the interval 30-140 (PVVLFLHGNP…PMPTWQDFHH (111 aa)). The active-site Nucleophile is aspartate 103. Residue glutamate 127 is the Proton donor of the active site. Histidine 280 (proton acceptor) is an active-site residue.

This sequence belongs to the haloalkane dehalogenase family. Type 2 subfamily. In terms of assembly, monomer.

The enzyme catalyses 1-haloalkane + H2O = a halide anion + a primary alcohol + H(+). Functionally, catalyzes hydrolytic cleavage of carbon-halogen bonds in halogenated aliphatic compounds, leading to the formation of the corresponding primary alcohols, halide ions and protons. The chain is Haloalkane dehalogenase from Bradyrhizobium diazoefficiens (strain JCM 10833 / BCRC 13528 / IAM 13628 / NBRC 14792 / USDA 110).